The primary structure comprises 367 residues: UDP-N-acetylglucosamine--N-acetylmuramyl-(pentapeptide) pyrophosphoryl-undecaprenol N-acetylglucosamine transferase (367 aa).

Residues 15-17 (TGG), N126, R169, S197, and Q298 contribute to the UDP-N-acetyl-alpha-D-glucosamine site.

It belongs to the glycosyltransferase 28 family. MurG subfamily.

The protein localises to the cell inner membrane. The catalysed reaction is di-trans,octa-cis-undecaprenyl diphospho-N-acetyl-alpha-D-muramoyl-L-alanyl-D-glutamyl-meso-2,6-diaminopimeloyl-D-alanyl-D-alanine + UDP-N-acetyl-alpha-D-glucosamine = di-trans,octa-cis-undecaprenyl diphospho-[N-acetyl-alpha-D-glucosaminyl-(1-&gt;4)]-N-acetyl-alpha-D-muramoyl-L-alanyl-D-glutamyl-meso-2,6-diaminopimeloyl-D-alanyl-D-alanine + UDP + H(+). The protein operates within cell wall biogenesis; peptidoglycan biosynthesis. Cell wall formation. Catalyzes the transfer of a GlcNAc subunit on undecaprenyl-pyrophosphoryl-MurNAc-pentapeptide (lipid intermediate I) to form undecaprenyl-pyrophosphoryl-MurNAc-(pentapeptide)GlcNAc (lipid intermediate II). The sequence is that of UDP-N-acetylglucosamine--N-acetylmuramyl-(pentapeptide) pyrophosphoryl-undecaprenol N-acetylglucosamine transferase from Bradyrhizobium sp. (strain BTAi1 / ATCC BAA-1182).